The sequence spans 169 residues: Macro domain-containing protein SCO6450 (169 aa).

Residues Met-1–Gly-169 form the Macro domain.

Belongs to the MacroD-type family.

The sequence is that of Macro domain-containing protein SCO6450 from Streptomyces coelicolor (strain ATCC BAA-471 / A3(2) / M145).